Consider the following 635-residue polypeptide: Leucine-rich repeat and fibronectin type-III domain-containing protein 4 (635 aa).

The signal sequence occupies residues 1-16 (MAPPLLLLLLASGAAA). The 32-residue stretch at 17–48 (CPLPCVCQNLSESLSTLCAHRGLLFVPPNVDR) folds into the LRRNT domain. The Extracellular segment spans residues 17–518 (CPLPCVCQNL…LQAHVLGGTL (502 aa)). Asparagine 25 and asparagine 70 each carry an N-linked (GlcNAc...) asparagine glycan. LRR repeat units follow at residues 49-70 (RTVELRLADNFIQALGPPDFRN), 73-94 (GLVDLTLSRNAITRIGARAFGD), 97-118 (SLRSLHLDGNRLVELGTGSLRG), 121-142 (NLQHLILSGNQLGRIAPGAFDD), 146-161 (SLEDLDLSYNNLRQVP), 170-191 (ALHTLNLDHNLIDALPPGAFAQ), and 194-215 (QLSRLDLTSNRLATLAPDPLFS). The LRRCT domain occupies 234–280 (NPLHCNCELLWLRRLARPDDLETCASPPGLAGRYFWAVPEGEFSCEP). Positions 281–367 (PLIARHTQRL…GEATARVELR (87 aa)) constitute an Ig-like domain. Cysteine 302 and cysteine 351 are oxidised to a cystine. Asparagine 324, asparagine 333, asparagine 376, and asparagine 440 each carry an N-linked (GlcNAc...) asparagine glycan. The tract at residues 373–410 (HGGNSSAEGGRPGPSDIAASARTAAEGEGTLESEPAVQ) is disordered. Residues 405–502 (SEPAVQVTEV…GCAHFSTLPA (98 aa)) form the Fibronectin type-III domain. Residues 519 to 539 (TVAVGGVLVAALLVFTVALLV) form a helical membrane-spanning segment. Residues 540–635 (RGRGAGNGRL…SAERLEESVV (96 aa)) lie on the Cytoplasmic side of the membrane. The segment at 555-583 (HVQSQTNGGPSPTPKAHPPRSPPPRPQRS) is disordered. The span at 565-580 (SPTPKAHPPRSPPPRP) shows a compositional bias: pro residues. 2 positions are modified to phosphoserine: serine 585 and serine 626. The PDZ-binding signature appears at 632 to 635 (ESVV).

Belongs to the LRFN family. In terms of assembly, can form heteromeric complexes with LRFN1, LRFN2, LRFN3 and LRFN5. Unable to form homophilic interactions across cell junctions. Interacts with DLG1, DLG2, DLG3 and DLG4. Glycosylated.

It localises to the membrane. In terms of biological role, promotes neurite outgrowth in hippocampal neurons. May play a role in redistributing DLG4 to the cell periphery. The sequence is that of Leucine-rich repeat and fibronectin type-III domain-containing protein 4 (LRFN4) from Homo sapiens (Human).